A 220-amino-acid polypeptide reads, in one-letter code: Adenylate kinase (220 aa).

13–18 (GAGKGT) provides a ligand contact to ATP. The interval 33–62 (STGDILRAAVKEGTPLGLEAQSYMNRGALV) is NMP. AMP contacts are provided by residues Thr-34, Arg-39, 60–62 (ALV), 88–91 (GFPR), and Gln-95. Residues 129 to 170 (GRRTCPLCKRIFHVRFNPPPAAPPFCTDHTDCPSELVQRPDD) form an LID region. Arg-130 provides a ligand contact to ATP. The Zn(2+) site is built by Cys-133 and Cys-136. 139-140 (IF) lines the ATP pocket. Positions 156 and 160 each coordinate Zn(2+). Residues Arg-167 and Arg-178 each contribute to the AMP site. Arg-206 contributes to the ATP binding site.

Belongs to the adenylate kinase family. As to quaternary structure, monomer.

The protein localises to the cytoplasm. It catalyses the reaction AMP + ATP = 2 ADP. It functions in the pathway purine metabolism; AMP biosynthesis via salvage pathway; AMP from ADP: step 1/1. Functionally, catalyzes the reversible transfer of the terminal phosphate group between ATP and AMP. Plays an important role in cellular energy homeostasis and in adenine nucleotide metabolism. The sequence is that of Adenylate kinase from Gloeobacter violaceus (strain ATCC 29082 / PCC 7421).